The chain runs to 310 residues: Porphobilinogen deaminase (310 aa).

At C242 the chain carries S-(dipyrrolylmethanemethyl)cysteine.

It belongs to the HMBS family. Monomer. Requires dipyrromethane as cofactor.

It carries out the reaction 4 porphobilinogen + H2O = hydroxymethylbilane + 4 NH4(+). It functions in the pathway porphyrin-containing compound metabolism; protoporphyrin-IX biosynthesis; coproporphyrinogen-III from 5-aminolevulinate: step 2/4. Its function is as follows. Tetrapolymerization of the monopyrrole PBG into the hydroxymethylbilane pre-uroporphyrinogen in several discrete steps. This is Porphobilinogen deaminase from Shewanella baltica (strain OS223).